A 421-amino-acid polypeptide reads, in one-letter code: C2 calcium-dependent domain-containing protein 4C (421 aa).

Disordered stretches follow at residues 13-97 (RGSG…AKLA), 119-140 (DWLS…SLPS), 158-228 (HTRR…SPFG), and 250-303 (VSQL…TVHV). A compositionally biased stretch (polar residues) spans 215–228 (ESDTGSSAESSPFG). 3 positions are modified to phosphoserine: S262, S264, and S273. A C2 domain is found at 305–421 (PRGSVRLLAE…LPLTSLLPFL (117 aa)).

This sequence belongs to the C2CD4 family.

The polypeptide is C2 calcium-dependent domain-containing protein 4C (C2CD4C) (Homo sapiens (Human)).